A 353-amino-acid polypeptide reads, in one-letter code: Photosystem II protein D1 (353 aa).

Threonine 2 carries the N-acetylthreonine modification. A Phosphothreonine modification is found at threonine 2. Transmembrane regions (helical) follow at residues 29–46 (YIGW…TATS), 118–133 (HFLL…EWEL), and 142–156 (WIAV…AATA). Histidine 118 contributes to the chlorophyll a binding site. Pheophytin a is bound at residue tyrosine 126. Aspartate 170 and glutamate 189 together coordinate [CaMn4O5] cluster. Residues 197–218 (FHMLGVAGVFGGSLFSAMHGSL) traverse the membrane as a helical segment. Histidine 198 is a chlorophyll a binding site. Residues histidine 215 and 264–265 (SF) each bind a quinone. Histidine 215 contributes to the Fe cation binding site. Residue histidine 272 participates in Fe cation binding. A helical transmembrane segment spans residues 274–288 (FLAAWPVVGIWFTAL). The [CaMn4O5] cluster site is built by histidine 332, glutamate 333, aspartate 342, and alanine 344. Positions 345-353 (AVESPSING) are excised as a propeptide.

This sequence belongs to the reaction center PufL/M/PsbA/D family. As to quaternary structure, PSII is composed of 1 copy each of membrane proteins PsbA, PsbB, PsbC, PsbD, PsbE, PsbF, PsbH, PsbI, PsbJ, PsbK, PsbL, PsbM, PsbT, PsbX, PsbY, PsbZ, Psb30/Ycf12, at least 3 peripheral proteins of the oxygen-evolving complex and a large number of cofactors. It forms dimeric complexes. It depends on The D1/D2 heterodimer binds P680, chlorophylls that are the primary electron donor of PSII, and subsequent electron acceptors. It shares a non-heme iron and each subunit binds pheophytin, quinone, additional chlorophylls, carotenoids and lipids. D1 provides most of the ligands for the Mn4-Ca-O5 cluster of the oxygen-evolving complex (OEC). There is also a Cl(-1) ion associated with D1 and D2, which is required for oxygen evolution. The PSII complex binds additional chlorophylls, carotenoids and specific lipids. as a cofactor. In terms of processing, tyr-161 forms a radical intermediate that is referred to as redox-active TyrZ, YZ or Y-Z. C-terminally processed by CTPA; processing is essential to allow assembly of the oxygen-evolving complex and thus photosynthetic growth.

It is found in the plastid. The protein resides in the chloroplast thylakoid membrane. It carries out the reaction 2 a plastoquinone + 4 hnu + 2 H2O = 2 a plastoquinol + O2. In terms of biological role, photosystem II (PSII) is a light-driven water:plastoquinone oxidoreductase that uses light energy to abstract electrons from H(2)O, generating O(2) and a proton gradient subsequently used for ATP formation. It consists of a core antenna complex that captures photons, and an electron transfer chain that converts photonic excitation into a charge separation. The D1/D2 (PsbA/PsbD) reaction center heterodimer binds P680, the primary electron donor of PSII as well as several subsequent electron acceptors. The chain is Photosystem II protein D1 from Sinapis alba (White mustard).